Here is a 400-residue protein sequence, read N- to C-terminus: GTPase Obg (400 aa).

Positions 1-159 (MRFVDEAVIT…REIRLELKVL (159 aa)) constitute an Obg domain. One can recognise an OBG-type G domain in the interval 160 to 333 (ADVGLLGMPN…VVYYLMDQIE (174 aa)). GTP-binding positions include 166-173 (GMPNAGKS), 191-195 (FTTMV), 213-216 (DIPG), 283-286 (NKLD), and 314-316 (SGL). Mg(2+) contacts are provided by Ser-173 and Thr-193.

This sequence belongs to the TRAFAC class OBG-HflX-like GTPase superfamily. OBG GTPase family. In terms of assembly, monomer. Requires Mg(2+) as cofactor.

Its subcellular location is the cytoplasm. Its function is as follows. An essential GTPase which binds GTP, GDP and possibly (p)ppGpp with moderate affinity, with high nucleotide exchange rates and a fairly low GTP hydrolysis rate. Plays a role in control of the cell cycle, stress response, ribosome biogenesis and in those bacteria that undergo differentiation, in morphogenesis control. The protein is GTPase Obg of Acinetobacter baylyi (strain ATCC 33305 / BD413 / ADP1).